We begin with the raw amino-acid sequence, 364 residues long: Dual-specificity RNA methyltransferase RlmN (364 aa).

Glu91 serves as the catalytic Proton acceptor. The Radical SAM core domain occupies 97-333 (ESDRGTLCIS…VTVRKTRGDD (237 aa)). Cys104 and Cys338 are joined by a disulfide. Cys111, Cys115, and Cys118 together coordinate [4Fe-4S] cluster. Residues 164-165 (GE), Ser196, 218-220 (SLH), and Asn295 each bind S-adenosyl-L-methionine. Catalysis depends on Cys338, which acts as the S-methylcysteine intermediate.

It belongs to the radical SAM superfamily. RlmN family. [4Fe-4S] cluster serves as cofactor.

It localises to the cytoplasm. It carries out the reaction adenosine(2503) in 23S rRNA + 2 reduced [2Fe-2S]-[ferredoxin] + 2 S-adenosyl-L-methionine = 2-methyladenosine(2503) in 23S rRNA + 5'-deoxyadenosine + L-methionine + 2 oxidized [2Fe-2S]-[ferredoxin] + S-adenosyl-L-homocysteine. It catalyses the reaction adenosine(37) in tRNA + 2 reduced [2Fe-2S]-[ferredoxin] + 2 S-adenosyl-L-methionine = 2-methyladenosine(37) in tRNA + 5'-deoxyadenosine + L-methionine + 2 oxidized [2Fe-2S]-[ferredoxin] + S-adenosyl-L-homocysteine. Its function is as follows. Specifically methylates position 2 of adenine 2503 in 23S rRNA and position 2 of adenine 37 in tRNAs. m2A2503 modification seems to play a crucial role in the proofreading step occurring at the peptidyl transferase center and thus would serve to optimize ribosomal fidelity. The sequence is that of Dual-specificity RNA methyltransferase RlmN from Neisseria meningitidis serogroup A / serotype 4A (strain DSM 15465 / Z2491).